The sequence spans 163 residues: Succinate dehydrogenase assembly factor 2, mitochondrial (163 aa).

This sequence belongs to the SDHAF2 family. As to quaternary structure, interacts with the flavoprotein subunit within the SDH catalytic dimer.

It localises to the mitochondrion matrix. Its function is as follows. Plays an essential role in the assembly of succinate dehydrogenase (SDH), an enzyme complex (also referred to as respiratory complex II) that is a component of both the tricarboxylic acid (TCA) cycle and the mitochondrial electron transport chain, and which couples the oxidation of succinate to fumarate with the reduction of ubiquinone (coenzyme Q) to ubiquinol. Required for flavinylation (covalent attachment of FAD) of the flavoprotein subunit of the SDH catalytic dimer. The chain is Succinate dehydrogenase assembly factor 2, mitochondrial from Kluyveromyces lactis (strain ATCC 8585 / CBS 2359 / DSM 70799 / NBRC 1267 / NRRL Y-1140 / WM37) (Yeast).